We begin with the raw amino-acid sequence, 97 residues long: Large ribosomal subunit protein uL23 (97 aa).

This sequence belongs to the universal ribosomal protein uL23 family. In terms of assembly, part of the 50S ribosomal subunit. Contacts protein L29, and trigger factor when it is bound to the ribosome.

Its function is as follows. One of the early assembly proteins it binds 23S rRNA. One of the proteins that surrounds the polypeptide exit tunnel on the outside of the ribosome. Forms the main docking site for trigger factor binding to the ribosome. The polypeptide is Large ribosomal subunit protein uL23 (Sinorhizobium medicae (strain WSM419) (Ensifer medicae)).